The primary structure comprises 532 residues: uncharacterized protein (532 aa).

6 consecutive transmembrane segments (helical) span residues 7–26 (HSSY…LGRI), 30–52 (GLSL…GVII), 59–77 (FGLV…PGFF), 87–109 (LIII…KYAF), 116–134 (VVGL…AVAI), and 139–161 (SPLA…ILFV). RCK C-terminal domains follow at residues 179 to 262 (LEIE…LVGE) and 263 to 346 (REEG…LLGN). 4 helical membrane passes run 356–378 (FFPI…SFPG), 388–410 (GGVL…LWSM), 446–468 (GLLL…AFVG), and 509–531 (YATV…ATVV).

It belongs to the AAE transporter (TC 2.A.81) family.

Its subcellular location is the cell membrane. This is an uncharacterized protein from Bacteroides fragilis (strain YCH46).